The primary structure comprises 394 residues: Proliferation-associated protein 2G4 (394 aa).

Ser2 bears the N-acetylserine mark. The residue at position 2 (Ser2) is a Phosphoserine. Positions 2–48 (SGEDEQQEQTIAEDLVVTKYKMGGDIANRVLRSLVEASSSGVSVLSL) are necessary for nucleolar localization. Positions 46 to 54 (LSLCEKGDA) are RNA-binding. Residue Lys298 forms a Glycyl lysine isopeptide (Lys-Gly) (interchain with G-Cter in SUMO2) linkage. Positions 301–394 (LLQPFNVLYE…ETLEENGAGD (94 aa)) are necessary for nucleolar localization. Residue Ser335 is modified to Phosphoserine. The tract at residues 358-394 (LQSSASRKTQKKKKKKASKTVENATSGETLEENGAGD) is disordered. Ser361 carries the phosphoserine; by PKC/PRKCD modification. The segment at 361–375 (SASRKTQKKKKKKAS) is interaction with RNA. The span at 365 to 375 (KTQKKKKKKAS) shows a compositional bias: basic residues. Phosphothreonine occurs at positions 366 and 386.

The protein belongs to the peptidase M24 family. In terms of assembly, isoform 2 interacts with the cytoplasmic domain of non-phosphorylated ERBB3; the interaction requires PKC activity. Interacts with AR. Treatment with HRG leads to dissociation from ERBB3 and increases association with AR. Interacts with nucleolin/NCL. Component of a ribonucleoprotein complex containing at least PA2G4, NCL, TOP1, PABPC2, RPLP0, acetylated histone H1 (HIST1H1A or H1F1), histone H1 2/4, RPL4, RPL8, RPL15, RPL18, RPL18A, RPL21, RPL11, RPL12, RPL28, RPL27, RPLP2 and RPL24. Interacts with HDAC2. Interacts with RB1; the interaction is enhanced upon PA2G4 dephosphorylation. Interacts with AKT1. Isoform 1 and isoform 2 interact with RNF20. Isoform 2 interacts with HUWE1. Interacts with DNAJC21. In terms of processing, phosphorylated on serine and threonine residues. Phosphorylation is enhanced by HRG treatment. Basal phosphorylation is PKC-dependent and HRG-induced phosphorylation is predominantly PKC-independent. Phosphorylation at Ser-361 by PKC/PRKCD regulates its nucleolar localization. Isoform 2 is polyubiquitinated, leading to proteasomal degradation and phosphorylation by PKC/PRKCD enhances polyubiquitination. Widely expressed.

The protein localises to the cytoplasm. It is found in the nucleus. Its subcellular location is the nucleolus. In terms of biological role, may play a role in a ERBB3-regulated signal transduction pathway. Seems be involved in growth regulation. Acts a corepressor of the androgen receptor (AR) and is regulated by the ERBB3 ligand neuregulin-1/heregulin (HRG). Inhibits transcription of some E2F1-regulated promoters, probably by recruiting histone acetylase (HAT) activity. Binds RNA. Associates with 28S, 18S and 5.8S mature rRNAs, several rRNA precursors and probably U3 small nucleolar RNA. May be involved in regulation of intermediate and late steps of rRNA processing. May be involved in ribosome assembly. Mediates cap-independent translation of specific viral IRESs (internal ribosomal entry site). Together with PTBP1 is required for the translation initiation on the foot-and-mouth disease virus (FMDV) IRES. Regulates cell proliferation, differentiation, and survival. Isoform 1 suppresses apoptosis whereas isoform 2 promotes cell differentiation. This is Proliferation-associated protein 2G4 (Pa2g4) from Mus musculus (Mouse).